The chain runs to 366 residues: Aminomethyltransferase (366 aa).

This sequence belongs to the GcvT family. As to quaternary structure, the glycine cleavage system is composed of four proteins: P, T, L and H.

The catalysed reaction is N(6)-[(R)-S(8)-aminomethyldihydrolipoyl]-L-lysyl-[protein] + (6S)-5,6,7,8-tetrahydrofolate = N(6)-[(R)-dihydrolipoyl]-L-lysyl-[protein] + (6R)-5,10-methylene-5,6,7,8-tetrahydrofolate + NH4(+). Functionally, the glycine cleavage system catalyzes the degradation of glycine. The protein is Aminomethyltransferase of Bacillus cereus (strain G9842).